The primary structure comprises 211 residues: ATP phosphoribosyltransferase (211 aa).

It belongs to the ATP phosphoribosyltransferase family. Short subfamily. In terms of assembly, heteromultimer composed of HisG and HisZ subunits.

It is found in the cytoplasm. The catalysed reaction is 1-(5-phospho-beta-D-ribosyl)-ATP + diphosphate = 5-phospho-alpha-D-ribose 1-diphosphate + ATP. Its pathway is amino-acid biosynthesis; L-histidine biosynthesis; L-histidine from 5-phospho-alpha-D-ribose 1-diphosphate: step 1/9. Its function is as follows. Catalyzes the condensation of ATP and 5-phosphoribose 1-diphosphate to form N'-(5'-phosphoribosyl)-ATP (PR-ATP). Has a crucial role in the pathway because the rate of histidine biosynthesis seems to be controlled primarily by regulation of HisG enzymatic activity. This Bacillus cereus (strain AH187) protein is ATP phosphoribosyltransferase.